Here is an 89-residue protein sequence, read N- to C-terminus: Large ribosomal subunit protein uL29 (89 aa).

Belongs to the universal ribosomal protein uL29 family.

This chain is Large ribosomal subunit protein uL29, found in Frankia alni (strain DSM 45986 / CECT 9034 / ACN14a).